The sequence spans 319 residues: D-ribose/D-allose-binding protein (319 aa).

Residues 1-29 (MKRVASRRLLAAVVLTACSSFLPLSAVHA) form the signal peptide.

This sequence belongs to the bacterial solute-binding protein 2 family.

The protein localises to the periplasm. Binds specifically both D-ribose and D-allose, with affinities in the lower micromolar range. The sequence is that of D-ribose/D-allose-binding protein from Pseudomonas aeruginosa (strain ATCC 15692 / DSM 22644 / CIP 104116 / JCM 14847 / LMG 12228 / 1C / PRS 101 / PAO1).